Consider the following 563-residue polypeptide: Mitochondrial distribution and morphology protein 34 (563 aa).

In terms of domain architecture, SMP-LTD spans 1–195 (MAFNFNWSPL…LPAIIHRLSL (195 aa)). Disordered regions lie at residues 298-460 (ERGD…QIPT) and 535-563 (RHDKTAREGFWSTSSNGDDAPPAYEPKAL). 2 stretches are compositionally biased toward polar residues: residues 303 to 332 (AGTTTPATTSLHRPQSSLGGQSTTYTFSNR) and 346 to 357 (SLVNMNSATTGL). Residues 365–383 (SRSHTTRKKKNRVVNLRKS) show a composition bias toward basic residues. Composition is skewed to polar residues over residues 386–402 (TDNVSESGESETASITA) and 444–460 (PSRSITPEQGNMNQIPT).

Belongs to the MDM34 family. Component of the ER-mitochondria encounter structure (ERMES) or MDM complex, composed of mmm1, mdm10, mdm12 and mdm34.

Its subcellular location is the mitochondrion outer membrane. Its function is as follows. Component of the ERMES/MDM complex, which serves as a molecular tether to connect the endoplasmic reticulum (ER) and mitochondria. Components of this complex are involved in the control of mitochondrial shape and protein biogenesis, and function in nonvesicular lipid trafficking between the ER and mitochondria. Mdm34 is required for the interaction of the ER-resident membrane protein mmm1 and the outer mitochondrial membrane-resident beta-barrel protein mdm10. The polypeptide is Mitochondrial distribution and morphology protein 34 (Sclerotinia sclerotiorum (strain ATCC 18683 / 1980 / Ss-1) (White mold)).